The chain runs to 288 residues: Glutamate racemase (288 aa).

Residues 10 to 11 (DS) and 42 to 43 (YG) contribute to the substrate site. The active-site Proton donor/acceptor is cysteine 73. 74–75 (NT) contacts substrate. Cysteine 184 serves as the catalytic Proton donor/acceptor. 185–186 (TH) lines the substrate pocket.

This sequence belongs to the aspartate/glutamate racemases family.

It carries out the reaction L-glutamate = D-glutamate. The protein operates within cell wall biogenesis; peptidoglycan biosynthesis. In terms of biological role, provides the (R)-glutamate required for cell wall biosynthesis. In Corynebacterium kroppenstedtii (strain DSM 44385 / JCM 11950 / CIP 105744 / CCUG 35717), this protein is Glutamate racemase.